Here is a 56-residue protein sequence, read N- to C-terminus: uncharacterized protein (56 aa).

A helical transmembrane segment spans residues 2 to 22 (ILYIIVAISILLNIILGIKVI).

Its subcellular location is the membrane. This is an uncharacterized protein from Methanocaldococcus jannaschii (strain ATCC 43067 / DSM 2661 / JAL-1 / JCM 10045 / NBRC 100440) (Methanococcus jannaschii).